Here is a 229-residue protein sequence, read N- to C-terminus: Chromophore lyase CpcT/CpeT 1 (229 aa).

The protein belongs to the CpcT/CpeT biliprotein lyase family.

Covalently attaches a chromophore to Cys residue(s) of phycobiliproteins. This Gloeobacter violaceus (strain ATCC 29082 / PCC 7421) protein is Chromophore lyase CpcT/CpeT 1.